The sequence spans 554 residues: Carboxypeptidase Y homolog A (554 aa).

A signal peptide spans 1–17 (MRVAASTVLLGVASAAS). The propeptide occupies 18 to 137 (FQQQTQHVLS…KLADFNLRVK (120 aa)). 5 disulfides stabilise this stretch: C191–C431, C325–C339, C349–C372, C356–C365, and C394–C401. N222 carries N-linked (GlcNAc...) asparagine glycosylation. S278 is a catalytic residue. Residue D470 is part of the active site. N-linked (GlcNAc...) asparagine glycosylation is present at N518. The active site involves H529.

The protein belongs to the peptidase S10 family.

It localises to the vacuole. The enzyme catalyses Release of a C-terminal amino acid with broad specificity.. Its function is as follows. Vacuolar carboxypeptidase involved in degradation of small peptides. Digests preferentially peptides containing an aliphatic or hydrophobic residue in P1' position, as well as methionine, leucine or phenylalanine in P1 position of ester substrate. In Podospora anserina (strain S / ATCC MYA-4624 / DSM 980 / FGSC 10383) (Pleurage anserina), this protein is Carboxypeptidase Y homolog A (CPYA).